The sequence spans 50 residues: MARYRRCRSQSRSRCCRPRRRCRRRRRSCRARRRATRCCRRRYRLRCRRY.

Belongs to the protamine P1 family. As to expression, testis.

The protein resides in the nucleus. It localises to the chromosome. Protamines substitute for histones in the chromatin of sperm during the haploid phase of spermatogenesis. They compact sperm DNA into a highly condensed, stable and inactive complex. The polypeptide is Sperm protamine P1 (PRM1) (Trachypithecus vetulus (Purple-faced langur)).